Consider the following 61-residue polypeptide: Large ribosomal subunit protein uL30 (61 aa).

This sequence belongs to the universal ribosomal protein uL30 family. Part of the 50S ribosomal subunit.

The chain is Large ribosomal subunit protein uL30 from Thermosipho melanesiensis (strain DSM 12029 / CIP 104789 / BI429).